Consider the following 403-residue polypeptide: G2/mitotic-specific cyclin-B1 (403 aa).

The protein belongs to the cyclin family. Cyclin AB subfamily. As to quaternary structure, interacts with the CDC2 protein kinase to form a serine/threonine kinase holoenzyme complex also known as maturation promoting factor (MPF). The cyclin subunit imparts substrate specificity to the complex.

In terms of biological role, essential for the control of the cell cycle at the G2/M (mitosis) transition. The protein is G2/mitotic-specific cyclin-B1 (ccnb1) of Anguilla japonica (Japanese eel).